The primary structure comprises 623 residues: DNA-directed RNA polymerase subunit gamma (623 aa).

Residues cysteine 70, cysteine 72, cysteine 85, and cysteine 88 each contribute to the Zn(2+) site. The Mg(2+) site is built by aspartate 466, aspartate 468, and aspartate 470.

This sequence belongs to the RNA polymerase beta' chain family. RpoC1 subfamily. As to quaternary structure, in cyanobacteria the RNAP catalytic core is composed of 2 alpha, 1 beta, 1 beta', 1 gamma and 1 omega subunit. When a sigma factor is associated with the core the holoenzyme is formed, which can initiate transcription. Requires Mg(2+) as cofactor. The cofactor is Zn(2+).

It carries out the reaction RNA(n) + a ribonucleoside 5'-triphosphate = RNA(n+1) + diphosphate. Its function is as follows. DNA-dependent RNA polymerase catalyzes the transcription of DNA into RNA using the four ribonucleoside triphosphates as substrates. The protein is DNA-directed RNA polymerase subunit gamma of Acaryochloris marina (strain MBIC 11017).